A 337-amino-acid polypeptide reads, in one-letter code: Ketol-acid reductoisomerase (NADP(+)) (337 aa).

Positions 3-183 constitute a KARI N-terminal Rossmann domain; the sequence is VEVFYDDDAD…GGTRAGVIKT (181 aa). Residues 26 to 29, S52, S54, and 84 to 87 each bind NADP(+); these read YGSQ and DTAQ. Residue H109 is part of the active site. G135 contacts NADP(+). The KARI C-terminal knotted domain occupies 184-329; it reads TFTEETETDL…GRLRAMMSWV (146 aa). Residues D192, E196, E228, and E232 each contribute to the Mg(2+) site. S253 contributes to the substrate binding site.

It belongs to the ketol-acid reductoisomerase family. Mg(2+) serves as cofactor.

It carries out the reaction (2R)-2,3-dihydroxy-3-methylbutanoate + NADP(+) = (2S)-2-acetolactate + NADPH + H(+). The catalysed reaction is (2R,3R)-2,3-dihydroxy-3-methylpentanoate + NADP(+) = (S)-2-ethyl-2-hydroxy-3-oxobutanoate + NADPH + H(+). It functions in the pathway amino-acid biosynthesis; L-isoleucine biosynthesis; L-isoleucine from 2-oxobutanoate: step 2/4. The protein operates within amino-acid biosynthesis; L-valine biosynthesis; L-valine from pyruvate: step 2/4. In terms of biological role, involved in the biosynthesis of branched-chain amino acids (BCAA). Catalyzes an alkyl-migration followed by a ketol-acid reduction of (S)-2-acetolactate (S2AL) to yield (R)-2,3-dihydroxy-isovalerate. In the isomerase reaction, S2AL is rearranged via a Mg-dependent methyl migration to produce 3-hydroxy-3-methyl-2-ketobutyrate (HMKB). In the reductase reaction, this 2-ketoacid undergoes a metal-dependent reduction by NADPH to yield (R)-2,3-dihydroxy-isovalerate. This Salinispora tropica (strain ATCC BAA-916 / DSM 44818 / JCM 13857 / NBRC 105044 / CNB-440) protein is Ketol-acid reductoisomerase (NADP(+)).